Consider the following 316-residue polypeptide: Lys-63-specific deubiquitinase BRCC36 (316 aa).

N-acetylalanine is present on Ala-2. Residues 12–179 (VHLESDAFLV…YTCFQSIQAQ (168 aa)) form the MPN domain. Positions 122, 124, and 135 each coordinate Zn(2+). A JAMM motif motif is present at residues 122 to 135 (HSHPHITVWPSHVD). Ser-258 is subject to Phosphoserine.

It belongs to the peptidase M67A family. BRCC36 subfamily. Component of the ARISC complex, at least composed of UIMC1/RAP80, ABRAXAS1, BRCC3/BRCC36, BABAM2 and BABAM1/NBA1. Component of the BRCA1-A complex, at least composed of BRCA1, BARD1, UIMC1/RAP80, ABRAXAS1, BRCC3/BRCC36, BABAM2 and BABAM1/NBA1. In the BRCA1-A complex, interacts directly with ABRAXAS1 and BABAM2. Component of the BRISC complex, at least composed of ABRAXAS2, BRCC3/BRCC36, BABAM2 and BABAM1/NBA1. Identified in a complex with SHMT2 and the other subunits of the BRISC complex. In the BRISC complex, interacts directly with ABRAXAS2. Identified in a complex with ABRAXAS2 and NUMA1. The BRISC complex interacts with the CSN complex. Component of the BRCA1/BRCA2 containing complex (BRCC), which also contains BRCA1, BRCA2, BARD1, BABAM2 and RAD51. BRCC is a ubiquitin E3 ligase complex that enhances cellular survival following DNA damage. Interacts with BRCA1. Binds polyubiquitin. Interacts with PWWP2B. Interacts with HDAC1; this interaction is enhanced in the presence of PWWP2B. Zn(2+) is required as a cofactor.

It localises to the nucleus. It is found in the cytoplasm. Its subcellular location is the cytoskeleton. The protein resides in the spindle pole. Its function is as follows. Metalloprotease that specifically cleaves 'Lys-63'-linked polyubiquitin chains. Does not have activity toward 'Lys-48'-linked polyubiquitin chains. Component of the BRCA1-A complex, a complex that specifically recognizes 'Lys-63'-linked ubiquitinated histones H2A and H2AX at DNA lesions sites, leading to target the BRCA1-BARD1 heterodimer to sites of DNA damage at double-strand breaks (DSBs). In the BRCA1-A complex, it specifically removes 'Lys-63'-linked ubiquitin on histones H2A and H2AX, antagonizing the RNF8-dependent ubiquitination at double-strand breaks (DSBs). Catalytic subunit of the BRISC complex, a multiprotein complex that specifically cleaves 'Lys-63'-linked ubiquitin in various substrates. Mediates the specific 'Lys-63'-specific deubiquitination associated with the COP9 signalosome complex (CSN), via the interaction of the BRISC complex with the CSN complex. The BRISC complex is required for normal mitotic spindle assembly and microtubule attachment to kinetochores via its role in deubiquitinating NUMA1. Plays a role in interferon signaling via its role in the deubiquitination of the interferon receptor IFNAR1; deubiquitination increases IFNAR1 activity by enhancing its stability and cell surface expression. Acts as a regulator of the NLRP3 inflammasome by mediating deubiquitination of NLRP3, leading to NLRP3 inflammasome assembly. Down-regulates the response to bacterial lipopolysaccharide (LPS) via its role in IFNAR1 deubiquitination. Deubiquitinates HDAC1 and PWWP2B leading to their stabilization. This chain is Lys-63-specific deubiquitinase BRCC36 (BRCC3), found in Bos taurus (Bovine).